A 406-amino-acid chain; its full sequence is 3-phosphoshikimate 1-carboxyvinyltransferase (406 aa).

3-phosphoshikimate-binding residues include Lys20, Ser21, and Arg25. Lys20 serves as a coordination point for phosphoenolpyruvate. Phosphoenolpyruvate is bound by residues Gly84 and Arg112. 3-phosphoshikimate-binding residues include Ser155, Ser156, Gln157, Asp295, Gln317, and Lys321. Gln157 contacts phosphoenolpyruvate. Asp295 (proton acceptor) is an active-site residue. Phosphoenolpyruvate-binding residues include Arg325, Arg366, and Lys392.

It belongs to the EPSP synthase family. In terms of assembly, monomer.

It localises to the cytoplasm. The enzyme catalyses 3-phosphoshikimate + phosphoenolpyruvate = 5-O-(1-carboxyvinyl)-3-phosphoshikimate + phosphate. It functions in the pathway metabolic intermediate biosynthesis; chorismate biosynthesis. Its function is as follows. Catalyzes the transfer of the enolpyruvyl moiety of phosphoenolpyruvate (PEP) to the 5-hydroxyl of shikimate-3-phosphate (S3P) to produce enolpyruvyl shikimate-3-phosphate and inorganic phosphate. The sequence is that of 3-phosphoshikimate 1-carboxyvinyltransferase from Pyrococcus furiosus (strain ATCC 43587 / DSM 3638 / JCM 8422 / Vc1).